Here is a 152-residue protein sequence, read N- to C-terminus: B3 domain-containing protein At1g10455 (152 aa).

Positions 24 to 131 (LKKKLSDSDL…EVKFKHFKSQ (108 aa)) form a DNA-binding region, TF-B3.

It localises to the nucleus. The sequence is that of B3 domain-containing protein At1g10455 from Arabidopsis thaliana (Mouse-ear cress).